The chain runs to 577 residues: MLAAQKQRLTELFQAAVAPLVASTDLQPTITLERPRDPSHGDVACNLAMQIAKPLKKNPREVAQALAAALLDNPANRDLIEAADIAGPGFINLRLTAASRQAVVKTVLQQGAEFGKSNLGNDKKVIIEFVSANPTGPLHVGHGRQGALGDAMSSLFQAQGYDVTREFYYNDAGVQIATLATSVQARGKGLKPGVEGWPESAYNGDYIQDIANDFLAKKTVSASNGEPVTASGDINDIESIRQFSVTYLRREQDLDLQAFGVKFDNYYLESSLYADGKVEKTVDALIKADKTYELDGALWLRTTDYRDDKDRVMKKSDGTYTYFVPDVAYHTVKWQRGFTQAINVQGSDHHGTIARVRAGLQALDIGIPQGYPDYVLHKMVTVMRNGEEVKISKRAGSYVTLRDLIEWSNGEVVDGEVRDLTRGRDAVRFFLISRKADTEFVFDVDIALTQGDENPVYYVQYAHARICSVLAQWTDGDEASLDKVDLSPLTAARETALLAKLAEYPETLQKALEELGPHQVAFYLRDLAGELHSYYNAERVLVDDEALKMARIALMSATRQVLRNGLALIGVSAPARM.

Residues 132 to 142 (ANPTGPLHVGH) carry the 'HIGH' region motif.

It belongs to the class-I aminoacyl-tRNA synthetase family. Monomer.

It is found in the cytoplasm. The enzyme catalyses tRNA(Arg) + L-arginine + ATP = L-arginyl-tRNA(Arg) + AMP + diphosphate. This is Arginine--tRNA ligase from Janthinobacterium sp. (strain Marseille) (Minibacterium massiliensis).